A 285-amino-acid polypeptide reads, in one-letter code: Bifunctional protein FolD (285 aa).

NADP(+)-binding positions include 166-168 (GRS), Ser-191, and Ile-232.

The protein belongs to the tetrahydrofolate dehydrogenase/cyclohydrolase family. In terms of assembly, homodimer.

The catalysed reaction is (6R)-5,10-methylene-5,6,7,8-tetrahydrofolate + NADP(+) = (6R)-5,10-methenyltetrahydrofolate + NADPH. It catalyses the reaction (6R)-5,10-methenyltetrahydrofolate + H2O = (6R)-10-formyltetrahydrofolate + H(+). The protein operates within one-carbon metabolism; tetrahydrofolate interconversion. Its function is as follows. Catalyzes the oxidation of 5,10-methylenetetrahydrofolate to 5,10-methenyltetrahydrofolate and then the hydrolysis of 5,10-methenyltetrahydrofolate to 10-formyltetrahydrofolate. The chain is Bifunctional protein FolD from Rickettsia typhi (strain ATCC VR-144 / Wilmington).